A 33-amino-acid polypeptide reads, in one-letter code: Mu-theraphotoxin-Osp1a (33 aa).

Disulfide bonds link Cys-2–Cys-17, Cys-9–Cys-22, and Cys-16–Cys-29.

Belongs to the neurotoxin 10 (Hwtx-1) family. In terms of tissue distribution, expressed by the venom gland.

It localises to the secreted. Its function is as follows. Voltage-gated sodium channel Nav1.7/SCN9A inhibitor. The sequence is that of Mu-theraphotoxin-Osp1a from Orphnaecus sp. (strain Sibaliw/Philippines) (Tarantula spider).